A 76-amino-acid polypeptide reads, in one-letter code: Acyl carrier protein (76 aa).

One can recognise a Carrier domain in the interval 2 to 76 (SNIEERVIKV…QSAIDFVKSR (75 aa)). The residue at position 37 (serine 37) is an O-(pantetheine 4'-phosphoryl)serine.

Belongs to the acyl carrier protein (ACP) family. Post-translationally, 4'-phosphopantetheine is transferred from CoA to a specific serine of apo-ACP by AcpS. This modification is essential for activity because fatty acids are bound in thioester linkage to the sulfhydryl of the prosthetic group.

Its subcellular location is the cytoplasm. It functions in the pathway lipid metabolism; fatty acid biosynthesis. Its function is as follows. Carrier of the growing fatty acid chain in fatty acid biosynthesis. The protein is Acyl carrier protein of Dichelobacter nodosus (strain VCS1703A).